Consider the following 500-residue polypeptide: MQVLILLSLAFLASCVVAYSRRRPGGRGAGNLPPGPPRLPIIGNMLQLGQNPHKSLAHLAKTYGPLMSLKLGNQFVVVVSSPEMAREVLQRHGLVFSTPCAPIAVQILGHGEVSMNMLPATSPIWKKLRKIAREKLFSNQALHDTRAVRWERLRKLADYVGRCSGAMNVGEATFTTMSNLMFSTLFSVEITQYADSDSDSGVNKKFREHVNAITRYIGVPNIADFFPIFAPFDPQGLRRKLTYHFGSLLELVQSLIEQRLRARNAATYRKKDDFLEMLLDLSEGDEYDLSVNEIKHLCVDLIIAGSDTSAATTEWAMVELLLHPDKLAKLKAELKSVVGDKSIIEESDISKLPYLQATVKEVLRYHPAAPLLAPHLAEEETQLNGYIIPKNTKIFINDWTISRDPSIWKNPEMFEPERFLDNDIDFCGQHFELIPFGSGRRICPGLPLASRMLHCMVATLCHNFDWELEKGTESKQLQREDVFGLALQKKIPLRAIPIKV.

Residues 4–24 (LILLSLAFLASCVVAYSRRRP) form a helical membrane-spanning segment. C443 provides a ligand contact to heme.

It belongs to the cytochrome P450 family. It depends on heme as a cofactor. In terms of tissue distribution, mostly expressed in young leaves, particularly in glandular trichomes.

The protein localises to the membrane. It carries out the reaction 11-hydroxyferruginol + 3 reduced [NADPH--hemoprotein reductase] + 3 O2 = carnosate + 3 oxidized [NADPH--hemoprotein reductase] + 4 H2O + 4 H(+). The enzyme catalyses miltiradiene + 2 reduced [NADPH--hemoprotein reductase] + 2 O2 = miltiradien-20-al + 2 oxidized [NADPH--hemoprotein reductase] + 3 H2O + 2 H(+). The catalysed reaction is ferruginol + 3 reduced [NADPH--hemoprotein reductase] + 3 O2 = pisiferate + 3 oxidized [NADPH--hemoprotein reductase] + 4 H2O + 4 H(+). Its pathway is secondary metabolite biosynthesis; terpenoid biosynthesis. Monooxygenase involved in the biosynthesis of carnosate, a potent antioxidant labdane-related diterpene natural product. Catalyzes the oxidation of 11-hydroxyferruginol to produce carnosate. Mediates the conversion of miltiradien into miltiradien-20-al. Also involved in the production of pisiferic acid and derivative products from ferruginol. The protein is Carnosic acid synthase of Salvia fruticosa (Greek sage).